Consider the following 437-residue polypeptide: Triacylglycerol lipase (437 aa).

One can recognise a PE domain in the interval 1-100 (MVSYVVALPE…AELANASLLQ (100 aa)). Residues 101 to 206 (SEFASGIGNG…GNSPPPLLNS (106 aa)) form a linker region. Residues 207–437 (LLGQTVQYTT…QINQQLGIAA (231 aa)) are lipase. Positions 239–241 (HGG) match the Involved in the stabilization of the negatively charged intermediate by the formation of the oxyanion hole motif. Active-site residues include serine 309, aspartate 383, and histidine 413.

This sequence in the N-terminal section; belongs to the mycobacterial PE family. PGRS subfamily. The protein in the C-terminal section; belongs to the 'GDXG' lipolytic enzyme family. Forms aggregates via its PE domain. Post-translationally, upon export, the PE domain is removed by proteolytic cleavage. Cleavage occurs at the cell surface and is not required for secretion. Cleaved after Gly-149 by the aspartic protease PecA. May also be cleaved before Leu-98 and after Ala-136.

Its subcellular location is the cytoplasm. It localises to the secreted. The protein resides in the cell wall. It is found in the cell surface. The enzyme catalyses a triacylglycerol + H2O = a diacylglycerol + a fatty acid + H(+). The catalysed reaction is 1,2,3-tri-(9Z-octadecenoyl)-glycerol + H2O = di-(9Z)-octadecenoylglycerol + (9Z)-octadecenoate + H(+). It carries out the reaction an acetyl ester + H2O = an aliphatic alcohol + acetate + H(+). It catalyses the reaction a butanoate ester + H2O = an aliphatic alcohol + butanoate + H(+). The enzyme catalyses a hexanoate ester + H2O = an aliphatic alcohol + hexanoate + H(+). The catalysed reaction is an octanoate ester + H2O = an aliphatic alcohol + octanoate + H(+). It carries out the reaction a dodecanoate ester + H2O = an aliphatic alcohol + dodecanoate + H(+). It catalyses the reaction a tetradecanoate ester + H2O = an aliphatic alcohol + tetradecanoate + H(+). The enzyme catalyses hexadecanoate ester + H2O = an aliphatic alcohol + hexadecanoate + H(+). The catalysed reaction is octadecanoate ester + H2O = an aliphatic alcohol + octadecanoate + H(+). It carries out the reaction 1-butyrylglycerol + H2O = butanoate + glycerol + H(+). It catalyses the reaction 1,2,3-tributanoylglycerol + H2O = dibutanoylglycerol + butanoate + H(+). Its activity is regulated as follows. PE domain down-regulates lipase activity. With respect to regulation, cleavage by PecA does not affect surface localization and lipase activity. Inhibited by diethyl-p-nitrophenyl phosphate (E-600) at 0.5 uM, by phenylmethanesulfonyl fluoride at 5 mM and by polyethylene glycol sorbitan monolaurate (Tween 20). Also inhibited by CaCl(2), CoCl(2), MnCl(2), ZnCl(2) and MgCl(2). Inhibited by several hydrazides compounds. Stimulated slightly by SDS at concentrations up to 2 mM, above which the activity is severely inhibited. Catalyzes the hydrolysis of both intracellular and extracellular triacylglycerol (TAG). In vitro, can also hydrolyze p-nitrophenyl (pNP) esters with various chain lengths, including pNP-acetate (C2), pNP-butyrate (C4), pNP-caproate (C6), pNP-caprylate (C8), pNP-laurate (C12), pNP-myristate (C14), pNP-palmitate (C16) and pNP-stearate (C18). Also hydrolyzes monobutyrin, tributyrin and trioctanoin. Overexpression results in increase of virulence characterized by reduced survival of infected mouse and increased burden of bacilli in the lungs. Hydrolyzes internal or host-derived TAG depending on its localization. Its function is as follows. Hydrolyzes TAG that accumulates within mycobacterial intracytosolic lipid inclusions (ILI). Probably responsible for the utilization of stored long-chain TAG during the dormancy and reactivation stages of the pathogen. In terms of biological role, hydrolyzes host-derived TAG. The chain is Triacylglycerol lipase from Mycobacterium tuberculosis (strain ATCC 25618 / H37Rv).